The primary structure comprises 240 residues: Adenylate dimethylallyltransferase (240 aa).

This sequence belongs to the isopentenyl transferase family.

It catalyses the reaction dimethylallyl diphosphate + AMP = N(6)-(dimethylallyl)adenosine 5'-phosphate + diphosphate. In terms of biological role, transfers dimethylallyl groups to AMP as part of the biosynthesis of cytokinin phytohormones. The polypeptide is Adenylate dimethylallyltransferase (izt) (Agrobacterium tumefaciens (strain Ach5)).